A 147-amino-acid polypeptide reads, in one-letter code: Large ribosomal subunit protein uL16 (147 aa).

Belongs to the universal ribosomal protein uL16 family. In terms of assembly, part of the 50S ribosomal subunit.

Functionally, binds 23S rRNA and is also seen to make contacts with the A and possibly P site tRNAs. The sequence is that of Large ribosomal subunit protein uL16 from Clostridium botulinum (strain ATCC 19397 / Type A).